Consider the following 249-residue polypeptide: Triosephosphate isomerase (249 aa).

Residue 9–11 (NWK) coordinates substrate. The active-site Electrophile is the H94. The Proton acceptor role is filled by E166. Residues G172, S214, and 235–236 (GG) each bind substrate.

This sequence belongs to the triosephosphate isomerase family. In terms of assembly, homodimer.

It localises to the cytoplasm. The catalysed reaction is D-glyceraldehyde 3-phosphate = dihydroxyacetone phosphate. Its pathway is carbohydrate biosynthesis; gluconeogenesis. It participates in carbohydrate degradation; glycolysis; D-glyceraldehyde 3-phosphate from glycerone phosphate: step 1/1. In terms of biological role, involved in the gluconeogenesis. Catalyzes stereospecifically the conversion of dihydroxyacetone phosphate (DHAP) to D-glyceraldehyde-3-phosphate (G3P). The sequence is that of Triosephosphate isomerase from Leptospira biflexa serovar Patoc (strain Patoc 1 / Ames).